The following is a 75-amino-acid chain: RNA-binding protein KhpA (75 aa).

Residues 29–75 (SIIIELKVAPEDMGKVIGKQGRIAQAIRTLVKAAALKEKKRVIVEII) form the KH domain.

It belongs to the KhpA RNA-binding protein family. Forms a complex with KhpB.

Its subcellular location is the cytoplasm. Its function is as follows. A probable RNA chaperone. Forms a complex with KhpB which binds to cellular RNA and controls its expression. Plays a role in peptidoglycan (PG) homeostasis and cell length regulation. The polypeptide is RNA-binding protein KhpA (Caldanaerobacter subterraneus subsp. tengcongensis (strain DSM 15242 / JCM 11007 / NBRC 100824 / MB4) (Thermoanaerobacter tengcongensis)).